Consider the following 233-residue polypeptide: Small heat shock protein hspF (233 aa).

One can recognise a sHSP domain in the interval 129 to 233; sequence IPLFTFFEPL…ILLITVNKFL (105 aa).

This sequence belongs to the small heat shock protein (HSP20) family.

The polypeptide is Small heat shock protein hspF (hspF-1) (Dictyostelium discoideum (Social amoeba)).